The primary structure comprises 668 residues: 1-deoxy-D-xylulose-5-phosphate synthase (668 aa).

Residues histidine 105 and 146–148 (AHS) each bind thiamine diphosphate. Position 177 (aspartate 177) interacts with Mg(2+). Residues 178 to 179 (GA), asparagine 206, tyrosine 316, and glutamate 398 each bind thiamine diphosphate. Asparagine 206 is a Mg(2+) binding site.

The protein belongs to the transketolase family. DXPS subfamily. In terms of assembly, homodimer. It depends on Mg(2+) as a cofactor. Thiamine diphosphate serves as cofactor.

The enzyme catalyses D-glyceraldehyde 3-phosphate + pyruvate + H(+) = 1-deoxy-D-xylulose 5-phosphate + CO2. The protein operates within metabolic intermediate biosynthesis; 1-deoxy-D-xylulose 5-phosphate biosynthesis; 1-deoxy-D-xylulose 5-phosphate from D-glyceraldehyde 3-phosphate and pyruvate: step 1/1. Catalyzes the acyloin condensation reaction between C atoms 2 and 3 of pyruvate and glyceraldehyde 3-phosphate to yield 1-deoxy-D-xylulose-5-phosphate (DXP). The chain is 1-deoxy-D-xylulose-5-phosphate synthase from Nitrobacter hamburgensis (strain DSM 10229 / NCIMB 13809 / X14).